A 485-amino-acid polypeptide reads, in one-letter code: D-alanine--D-alanyl carrier protein ligase (485 aa).

144–145 (TS) is a binding site for ATP. Asp-189 contributes to the D-alanine binding site. 284-289 (NTYGPT) contributes to the ATP binding site. Val-293 is a D-alanine binding site. 2 residues coordinate ATP: Asp-365 and Lys-473. D-alanine is bound at residue Lys-473.

This sequence belongs to the ATP-dependent AMP-binding enzyme family. DltA subfamily.

The protein localises to the cytoplasm. It carries out the reaction holo-[D-alanyl-carrier protein] + D-alanine + ATP = D-alanyl-[D-alanyl-carrier protein] + AMP + diphosphate. Its pathway is cell wall biogenesis; lipoteichoic acid biosynthesis. Functionally, catalyzes the first step in the D-alanylation of lipoteichoic acid (LTA), the activation of D-alanine and its transfer onto the D-alanyl carrier protein (Dcp) DltC. In an ATP-dependent two-step reaction, forms a high energy D-alanyl-AMP intermediate, followed by transfer of the D-alanyl residue as a thiol ester to the phosphopantheinyl prosthetic group of the Dcp. D-alanylation of LTA plays an important role in modulating the properties of the cell wall in Gram-positive bacteria, influencing the net charge of the cell wall. The polypeptide is D-alanine--D-alanyl carrier protein ligase (Staphylococcus haemolyticus (strain JCSC1435)).